A 105-amino-acid polypeptide reads, in one-letter code: Thiosulfate sulfurtransferase GlpE (105 aa).

The Rhodanese domain occupies 15 to 103 (MQQGAILVDI…WCRAELPIDT (89 aa)). Catalysis depends on Cys63, which acts as the Cysteine persulfide intermediate.

This sequence belongs to the GlpE family.

Its subcellular location is the cytoplasm. It catalyses the reaction thiosulfate + hydrogen cyanide = thiocyanate + sulfite + 2 H(+). The enzyme catalyses thiosulfate + [thioredoxin]-dithiol = [thioredoxin]-disulfide + hydrogen sulfide + sulfite + 2 H(+). In terms of biological role, transferase that catalyzes the transfer of sulfur from thiosulfate to thiophilic acceptors such as cyanide or dithiols. May function in a CysM-independent thiosulfate assimilation pathway by catalyzing the conversion of thiosulfate to sulfite, which can then be used for L-cysteine biosynthesis. The sequence is that of Thiosulfate sulfurtransferase GlpE from Haemophilus influenzae (strain 86-028NP).